The primary structure comprises 317 residues: Cytochrome f (317 aa).

Positions 1–31 (MIFKPQSFLKAIVLSMTITFAFNMSAPIASA) are cleaved as a signal peptide. Heme-binding residues include Tyr32, Cys52, Cys55, and His56. The helical transmembrane segment at 280 to 302 (PVRIQGLLAFFACILLAQILLVV) threads the bilayer.

It belongs to the cytochrome f family. In terms of assembly, the 4 large subunits of the cytochrome b6-f complex are cytochrome b6, subunit IV (17 kDa polypeptide, petD), cytochrome f and the Rieske protein, while the 4 small subunits are PetG, PetL, PetM and PetN. The complex functions as a dimer. Heme is required as a cofactor.

The protein localises to the plastid. The protein resides in the chloroplast thylakoid membrane. Component of the cytochrome b6-f complex, which mediates electron transfer between photosystem II (PSII) and photosystem I (PSI), cyclic electron flow around PSI, and state transitions. This is Cytochrome f from Chlamydomonas subcaudata.